Reading from the N-terminus, the 644-residue chain is MAISTGLFLLLGLLGQPWAGAAADSQAVVCEGTACYTAHWGKLSAAEAQHRCNENGGNLATVKSEEEARHVQQALTQLLKTKAPLEAKMGKFWIGLQREKGNCTYHDLPMRGFSWVGGGEDTAYSNWYKASKSSCIFKRCVSLILDLSLTPHPSHLPKWHESPCGTPEAPGNSIEGFLCKFNFKGMCRPLALGGPGRVTYTTPFQATTSSLEAVPFASVANVACGDEAKSETHYFLCNEKTPGIFHWGSSGPLCVSPKFGCSFNNGGCQQDCFEGGDGSFRCGCRPGFRLLDDLVTCASRNPCSSNPCTGGGMCHSVPLSENYTCRCPSGYQLDSSQVHCVDIDECQDSPCAQDCVNTLGSFHCECWVGYQPSGPKEEACEDVDECAAANSPCAQGCINTDGSFYCSCKEGYIVSGEDSTQCEDIDECSDARGNPCDSLCFNTDGSFRCGCPPGWELAPNGVFCSRGTVFSELPARPPQKEDNDDRKESTMPPTEMPSSPSGSKDVSNRAQTTGLFVQSDIPTASVPLEIEIPSEVSDVWFELGTYLPTTSGHSKPTHEDSVSAHSDTDGQNLLLFYILGTVVAISLLLVLALGILIYHKRRAKKEEIKEKKPQNAADSYSWVPERAESQAPENQYSPTPGTDC.

An N-terminal signal peptide occupies residues 1–22 (MAISTGLFLLLGLLGQPWAGAA). Residues 23–572 (ADSQAVVCEG…SAHSDTDGQN (550 aa)) are Extracellular-facing. A C-type lectin domain is found at 31–173 (EGTACYTAHW…CGTPEAPGNS (143 aa)). N-linked (GlcNAc...) asparagine glycosylation occurs at Asn-102. Intrachain disulfides connect Cys-140–Cys-164, Cys-261–Cys-272, Cys-268–Cys-282, Cys-284–Cys-297, Cys-303–Cys-314, Cys-308–Cys-325, Cys-327–Cys-340, Cys-346–Cys-355, Cys-351–Cys-364, Cys-366–Cys-380, Cys-386–Cys-397, Cys-393–Cys-406, Cys-408–Cys-422, Cys-428–Cys-440, Cys-436–Cys-449, and Cys-451–Cys-464. 2 EGF-like domains span residues 257 to 298 (PKFG…VTCA) and 299 to 341 (SRNP…VHCV). Asn-322 carries an N-linked (GlcNAc...) asparagine glycan. The region spanning 342-381 (DIDECQDSPCAQDCVNTLGSFHCECWVGYQPSGPKEEACE) is the EGF-like 3; calcium-binding domain. Residues 382–423 (DVDECAAANSPCAQGCINTDGSFYCSCKEGYIVSGEDSTQCE) form the EGF-like 4; calcium-binding domain. One can recognise an EGF-like 5; calcium-binding domain in the interval 424–465 (DIDECSDARGNPCDSLCFNTDGSFRCGCPPGWELAPNGVFCS). A disordered region spans residues 473–508 (LPARPPQKEDNDDRKESTMPPTEMPSSPSGSKDVSN). A compositionally biased stretch (basic and acidic residues) spans 478-489 (PQKEDNDDRKES). Low complexity predominate over residues 490–501 (TMPPTEMPSSPS). A helical membrane pass occupies residues 573–593 (LLLFYILGTVVAISLLLVLAL). The Cytoplasmic segment spans residues 594 to 644 (GILIYHKRRAKKEEIKEKKPQNAADSYSWVPERAESQAPENQYSPTPGTDC). The disordered stretch occupies residues 605-644 (KEEIKEKKPQNAADSYSWVPERAESQAPENQYSPTPGTDC). Ser-619 bears the Phosphoserine mark. 2 positions are modified to phosphotyrosine: Tyr-620 and Tyr-636. The span at 631–644 (APENQYSPTPGTDC) shows a compositional bias: polar residues.

As to quaternary structure, homodimer. Interacts with C1QBP; the association may represent a cell surface C1q receptor. Interacts with surfactant protein A/SFTPA1. Interacts with multimerin-2/MMRN2. Interacts with DAG1; this interaction plays an important role in endothelial cell migration. Interacts with CBL. Interacts with IGFBP7. Interacts with VEGFR2. N- and O-glycosylated. In terms of processing, phosphorylated on Tyr-620 and Tyr-636 by SRC; these phosphorylations promote endothelial cell adhesion and migration. As to expression, expressed in lung, heart and bone marrow. Expressed at lower level in ovary, whole embryo and fetal liver. Not detected in brain, adult liver or thymus. Highly expressed in peritoneal cavity and bone marrow macrophages. Not detected in epithelial cells.

The protein resides in the cell membrane. Its function is as follows. Cell surface receptor that plays a role in various physiological processes including inflammation, phagocytosis, and cell adhesion. Plays a role in phagocytosis and enhances the uptake of apoptotic cells and immune complexes by acting as a receptor for defense collagens including surfactant protein A/SFTPA1, C1q, and mannose-binding lectin (MBL2). Plays a role in the regulation of endothelial cell function and adhesion by activating angiogenesis. Mechanistically, exerts its angiogenic function by associating with beta-dystroglycan, leading to SRC-dependent phosphorylation and subsequent recruitment of CBL. In turn, CBL provides a docking site for downstream signaling components, such as CRKL to enhance cell migration. Participates in angiogenesis also by acting as a receptor for the ECM pan-endothelial glycoprotein multimerin-2/MMRN2 and IGFBP7 ligands. Both ligands play a non-redundant role in CD93-mediated endothelial cell function. Acts as a key regulator of endothelial barrier function through modulating VEGFR2 function. This chain is Complement component C1q receptor (Cd93), found in Mus musculus (Mouse).